A 557-amino-acid polypeptide reads, in one-letter code: Urocanate hydratase (557 aa).

NAD(+)-binding positions include Gly52–Gly53, Gln130, Gly176–Gly178, Glu196, Arg201, Asn242–Ala243, Gln263–His267, Tyr273–Leu274, and Tyr322. Cys410 is an active-site residue. Gly492 is a binding site for NAD(+).

The protein belongs to the urocanase family. Requires NAD(+) as cofactor.

It localises to the cytoplasm. It catalyses the reaction 4-imidazolone-5-propanoate = trans-urocanate + H2O. The protein operates within amino-acid degradation; L-histidine degradation into L-glutamate; N-formimidoyl-L-glutamate from L-histidine: step 2/3. In terms of biological role, catalyzes the conversion of urocanate to 4-imidazolone-5-propionate. The chain is Urocanate hydratase from Allorhizobium ampelinum (strain ATCC BAA-846 / DSM 112012 / S4) (Agrobacterium vitis (strain S4)).